The following is a 410-amino-acid chain: Tyrosine--tRNA ligase (410 aa).

Residue Tyr36 participates in L-tyrosine binding. The short motif at 41–50 (ATADSLTAGH) is the 'HIGH' region element. The L-tyrosine site is built by Tyr169 and Gln173. Residues 229 to 233 (KMGKT) carry the 'KMSKS' region motif. Lys232 contacts ATP. The S4 RNA-binding domain maps to 343–409 (IDLITMMIDA…GKKAYHLFRA (67 aa)).

It belongs to the class-I aminoacyl-tRNA synthetase family. TyrS type 1 subfamily. Homodimer.

Its subcellular location is the cytoplasm. The catalysed reaction is tRNA(Tyr) + L-tyrosine + ATP = L-tyrosyl-tRNA(Tyr) + AMP + diphosphate + H(+). In terms of biological role, catalyzes the attachment of tyrosine to tRNA(Tyr) in a two-step reaction: tyrosine is first activated by ATP to form Tyr-AMP and then transferred to the acceptor end of tRNA(Tyr). The protein is Tyrosine--tRNA ligase of Lachnoclostridium phytofermentans (strain ATCC 700394 / DSM 18823 / ISDg) (Clostridium phytofermentans).